A 350-amino-acid chain; its full sequence is Histidinol-phosphate aminotransferase 1 (350 aa).

Lys210 carries the post-translational modification N6-(pyridoxal phosphate)lysine.

Belongs to the class-II pyridoxal-phosphate-dependent aminotransferase family. Histidinol-phosphate aminotransferase subfamily. As to quaternary structure, homodimer. Requires pyridoxal 5'-phosphate as cofactor.

It catalyses the reaction L-histidinol phosphate + 2-oxoglutarate = 3-(imidazol-4-yl)-2-oxopropyl phosphate + L-glutamate. It functions in the pathway amino-acid biosynthesis; L-histidine biosynthesis; L-histidine from 5-phospho-alpha-D-ribose 1-diphosphate: step 7/9. This chain is Histidinol-phosphate aminotransferase 1, found in Pseudomonas fluorescens (strain Pf0-1).